The chain runs to 65 residues: Prokaryotic ubiquitin-like protein Pup (65 aa).

Residues 1–14 show a composition bias toward basic and acidic residues; sequence MSGHEQQRPSRREE. Residues 1–35 form a disordered region; the sequence is MSGHEQQRPSRREEDVEETPVVPAQAGAQAKESDA. The segment at 21 to 59 is ARC ATPase binding; sequence VVPAQAGAQAKESDADVDALLDEIDEVLESNSEEFVRGF. A coiled-coil region spans residues 26–49; it reads AGAQAKESDADVDALLDEIDEVLE. Gln65 is subject to Deamidated glutamine. Gln65 participates in a covalent cross-link: Isoglutamyl lysine isopeptide (Gln-Lys) (interchain with K-? in acceptor proteins).

The protein belongs to the prokaryotic ubiquitin-like protein family. In terms of assembly, strongly interacts with the proteasome-associated ATPase ARC through a hydrophobic interface; the interacting region of Pup lies in its C-terminal half. There is one Pup binding site per ARC hexamer ring. In terms of processing, is modified by deamidation of its C-terminal glutamine to glutamate by the deamidase Dop, a prerequisite to the subsequent pupylation process.

It participates in protein degradation; proteasomal Pup-dependent pathway. Protein modifier that is covalently attached to lysine residues of substrate proteins, thereby targeting them for proteasomal degradation. The tagging system is termed pupylation. This is Prokaryotic ubiquitin-like protein Pup from Kineococcus radiotolerans (strain ATCC BAA-149 / DSM 14245 / SRS30216).